Consider the following 132-residue polypeptide: Small ribosomal subunit protein uS8 (132 aa).

The protein belongs to the universal ribosomal protein uS8 family. Part of the 30S ribosomal subunit. Contacts proteins S5 and S12.

Functionally, one of the primary rRNA binding proteins, it binds directly to 16S rRNA central domain where it helps coordinate assembly of the platform of the 30S subunit. The sequence is that of Small ribosomal subunit protein uS8 from Mycolicibacterium gilvum (strain PYR-GCK) (Mycobacterium gilvum (strain PYR-GCK)).